Reading from the N-terminus, the 304-residue chain is MNNVLDLKLKKIDKIYRPGSKVSGNVVINSKDDMSHSGVTIVVEGTVQLQLSSKSVGLFEAFYNSLKPITLMHYTISVTNGGGKFQAGITELPFEFTLEPLPNQQLYDTYHGVFVNIQYSIKCDVKRGILSKDLSKTIEFIVEVPSQNKEVLMKSTPESLITFNITPDSLVNFKKISKADVPTFKISGGLVSAICNINEAFQGHMIIESADTVIKSVELQLVRVETCGCADGYAREVTEIQNIQIADGDIWRNFKIPLYMVFPRLFTCISTAGKTFKIEFEVNLVIMLEDGHLITENFPIKLIR.

The protein belongs to the VPS26 family. In terms of assembly, component of the commander complex that is essential for endosomal recycling of transmembrane cargos; the commander complex is composed of the CCC subcomplex and the retriever subcomplex. Component of the heterotrimeric retriever complex consisting of vps26c, vps29 and vps35l; within the complex interacts with vps35l. Interacts with snx17 (via C-terminus); the interaction is direct and associates snx17 with the retriever complex. Interacts with snx31; the interaction is direct.

It is found in the endosome. In terms of biological role, component of the commander complex that is essential for endosomal recycling of transmembrane cargos; the commander complex is composed of the CCC subcomplex and the retriever subcomplex. Component of the retriever complex, which is a heterotrimeric complex related to retromer cargo-selective complex (CSC) and essential for retromer-independent retrieval and recycling of numerous cargos such as integrin alpha-5/beta-1 (ITGA5:ITGB1). The recruitment of the retriever complex to the endosomal membrane involves CCC and WASH complexes. In the endosomes, drives the retriever and recycling of NxxY-motif-containing cargo proteins by coupling to snx17, a cargo essential for the homeostatic maintenance of numerous cell surface proteins associated with processes that include cell migration, cell adhesion, nutrient supply and cell signaling. In Dictyostelium discoideum (Social amoeba), this protein is Vacuolar protein sorting-associated protein 26C (vps26c).